The primary structure comprises 431 residues: ABSCISIC ACID-INSENSITIVE 5-like protein 7 (431 aa).

The interval 1 to 29 (MGTHINFNNLGGGGHPGGEGSSNQMKPTG) is disordered. Over residues 10-20 (LGGGGHPGGEG) the composition is skewed to gly residues. Residues Ser-39 and Ser-61 each carry the phosphoserine modification. Ser-110 bears the Phosphoserine; by CPK32 mark. Residues 133-153 (DGNMEGSSGGGGESNVPPGRQ) are disordered. Thr-155 carries the phosphothreonine modification. Over residues 319–331 (SPGTSSAENNSLS) the composition is skewed to polar residues. A disordered region spans residues 319-338 (SPGTSSAENNSLSPVPYVLN). The Nuclear localization signal signature appears at 340–347 (GRRSNTGL). The bZIP domain maps to 351 to 414 (IERRQRRMIK…KNELKETSKR (64 aa)). Residues 353–372 (RRQRRMIKNRESAARSRARK) form a basic motif region. A coiled-coil region spans residues 372 to 411 (KQAYTLELEAEIEKLKKTNQELQKKQAEMVEMQKNELKET). Residues 379-393 (LEAEIEKLKKTNQEL) are leucine-zipper.

Belongs to the bZIP family. ABI5 subfamily. DNA-binding heterodimer. Interacts with CPK32 and the AFP proteins AFP1, AFP2 and AFP3. Interacts with FREE1 (via C-terminus). Phosphorylated by CPK4 and CPK11 in vitro. In terms of tissue distribution, expressed in roots, leaves, flowers and immatures siliques.

The protein resides in the nucleus. Its function is as follows. Functions as a transcriptional activator in the ABA-inducible expression of LTI65/RD29B (AC Q04980). Binds specifically to the ABA-responsive element (ABRE) of the LTI65/RD29B (AC Q04980) gene promoter. Binds to the promoter of FREE1 and activates its transcription. In Arabidopsis thaliana (Mouse-ear cress), this protein is ABSCISIC ACID-INSENSITIVE 5-like protein 7.